A 130-amino-acid polypeptide reads, in one-letter code: Ribonuclease P protein component (130 aa).

This sequence belongs to the RnpA family. Consists of a catalytic RNA component (M1 or rnpB) and a protein subunit.

The catalysed reaction is Endonucleolytic cleavage of RNA, removing 5'-extranucleotides from tRNA precursor.. Its function is as follows. RNaseP catalyzes the removal of the 5'-leader sequence from pre-tRNA to produce the mature 5'-terminus. It can also cleave other RNA substrates such as 4.5S RNA. The protein component plays an auxiliary but essential role in vivo by binding to the 5'-leader sequence and broadening the substrate specificity of the ribozyme. This Psychrobacter sp. (strain PRwf-1) protein is Ribonuclease P protein component.